Here is an 89-residue protein sequence, read N- to C-terminus: Small ribosomal subunit protein bS20 (89 aa).

Basic and acidic residues predominate over residues 1–11; sequence MANHKSAEKRN. The disordered stretch occupies residues 1 to 30; sequence MANHKSAEKRNRQNQVARLRNKSTRTAMKN.

Belongs to the bacterial ribosomal protein bS20 family.

Its function is as follows. Binds directly to 16S ribosomal RNA. The sequence is that of Small ribosomal subunit protein bS20 from Desulfotalea psychrophila (strain LSv54 / DSM 12343).